Here is a 379-residue protein sequence, read N- to C-terminus: MIISASTDYRAAAERKLPPFLFHYADGGAYAEHTLRRNVADLSNIELRQRVLKNMSELDLSTELFGEKMSMPVGLAPVGLTGMYARRGEVQAAKAAAAKGIPFTLSTVSVCPIEEVAPAIDRPMWFQLYVLKDRGFMRNALERAKAAGCSTLVFTVDMPVPGARYRDAHSGMSGPNGPLRRVLQAMTHPQWAWDVGVMGKPHDLGNISAYRGNPTGLADYIGWLGANFDPSISWKDLEWIRDFWDGPMVIKGILDPEDARDAVTFGADGIIVSNHGGRQLDGVLSSARALPAIADAVKGELKILADSGIRTGLDVVRMLALGADTVLLGRAFIYALAVAGQAGVSNLLDLIEKEMRVAMVLTGAKSIAEITSDLLVKER.

Residues 1-379 (MIISASTDYR…ITSDLLVKER (379 aa)) form the FMN hydroxy acid dehydrogenase domain. Tyrosine 24 is a binding site for substrate. Residues serine 106 and glutamine 127 each coordinate FMN. Tyrosine 129 serves as a coordination point for substrate. Threonine 155 is a binding site for FMN. Arginine 164 is a binding site for substrate. An FMN-binding site is contributed by lysine 251. The active-site Proton acceptor is the histidine 275. Arginine 278 lines the substrate pocket. 306 to 330 (DSGIRTGLDVVRMLALGADTVLLGR) is an FMN binding site.

It belongs to the FMN-dependent alpha-hydroxy acid dehydrogenase family. In terms of assembly, homotetramer. FMN serves as cofactor.

The protein localises to the cell inner membrane. It catalyses the reaction (S)-lactate + A = pyruvate + AH2. Its function is as follows. Catalyzes the conversion of L-lactate to pyruvate. Is coupled to the respiratory chain. This is L-lactate dehydrogenase from Ectopseudomonas mendocina (strain ymp) (Pseudomonas mendocina).